A 99-amino-acid polypeptide reads, in one-letter code: uncharacterized protein (99 aa).

This is an uncharacterized protein from Salmonella typhimurium (strain LT2 / SGSC1412 / ATCC 700720).